We begin with the raw amino-acid sequence, 238 residues long: MVFFPELEQARLLRRYKRFLADIELANGEQLTIHCPNTGSMLNCMREGGQVWFSRSNDPKRKLPGTWEISETPQGRLACVNTGRANALVEEALRAGTILELAGFELLKREVAYGEERSRIDFYLEFADGRPAYVEVKSVTLGFPDTPVAAFPDAVTQRGAKHLRELAALARQGIRAVQLYCVNLTGIEAVRPAEEIDAAYAQALRAAVAEGVEVLAYGTRLDARGIVIDRPLPVLLNP.

It belongs to the SfsA family.

The chain is Sugar fermentation stimulation protein homolog from Pseudomonas entomophila (strain L48).